The sequence spans 342 residues: UDP-N-acetylenolpyruvoylglucosamine reductase (342 aa).

Positions 13–183 (IDHNAQHIVC…VAVGLRLPKE (171 aa)) constitute an FAD-binding PCMH-type domain. R159 is a catalytic residue. Position 190 (Y190) interacts with substrate. The Proton donor role is filled by S229. E325 is a catalytic residue.

The protein belongs to the MurB family. As to quaternary structure, monomer. Requires FAD as cofactor.

The protein resides in the cytoplasm. The catalysed reaction is UDP-N-acetyl-alpha-D-muramate + NADP(+) = UDP-N-acetyl-3-O-(1-carboxyvinyl)-alpha-D-glucosamine + NADPH + H(+). Its pathway is cell wall biogenesis; peptidoglycan biosynthesis. Cell wall formation. The polypeptide is UDP-N-acetylenolpyruvoylglucosamine reductase (Escherichia coli O157:H7).